Consider the following 315-residue polypeptide: Aspartate carbamoyltransferase catalytic subunit (315 aa).

Carbamoyl phosphate-binding residues include Arg54 and Thr55. Lys82 contributes to the L-aspartate binding site. Carbamoyl phosphate contacts are provided by Arg104, His134, and Gln137. Arg174 and Arg229 together coordinate L-aspartate. Carbamoyl phosphate contacts are provided by Gly270 and Pro271.

It belongs to the aspartate/ornithine carbamoyltransferase superfamily. ATCase family. As to quaternary structure, heterododecamer (2C3:3R2) of six catalytic PyrB chains organized as two trimers (C3), and six regulatory PyrI chains organized as three dimers (R2).

The enzyme catalyses carbamoyl phosphate + L-aspartate = N-carbamoyl-L-aspartate + phosphate + H(+). It participates in pyrimidine metabolism; UMP biosynthesis via de novo pathway; (S)-dihydroorotate from bicarbonate: step 2/3. Its function is as follows. Catalyzes the condensation of carbamoyl phosphate and aspartate to form carbamoyl aspartate and inorganic phosphate, the committed step in the de novo pyrimidine nucleotide biosynthesis pathway. This chain is Aspartate carbamoyltransferase catalytic subunit, found in Leifsonia xyli subsp. xyli (strain CTCB07).